The sequence spans 266 residues: MAPPQERDYIGLSPAAAAALATELRLGLPGTAEEAESEGGGGGGTDAAPLTLELLPKGGAKRGFADAIVGGPAGQRREAAGGKAAAAAAEAEEEEEKKKAQAPAAKAQVVGWPPIRSYRKNTMAMSQPALKGKDDGEAKQAPASGCLYVKVSMDGAPYLRKVDLKMYKNYKELSLALEKMFSCFTVGHGESNGKSGRDGLSDCRLMDLKNGTELVLTYEDKDEDWMLVGDVPWRMFTDSCRRLRIMKGSDAVGLAPRATDKSKNRN.

Residues 24-28 (LRLGL) carry the EAR-like (transcriptional repression) motif. A disordered region spans residues 27–50 (GLPGTAEEAESEGGGGGGTDAAPL). Positions 146 to 248 (CLYVKVSMDG…SCRRLRIMKG (103 aa)) constitute a PB1 domain.

It belongs to the Aux/IAA family. Homodimers and heterodimers. As to expression, highly expressed in flowers. Expressed in roots and seedlings.

It is found in the nucleus. Its function is as follows. Aux/IAA proteins are short-lived transcriptional factors that function as repressors of early auxin response genes at low auxin concentrations. In Oryza sativa subsp. japonica (Rice), this protein is Auxin-responsive protein IAA21 (IAA21).